A 378-amino-acid chain; its full sequence is Quinolinate synthase (378 aa).

Positions 59 and 80 each coordinate iminosuccinate. A [4Fe-4S] cluster-binding site is contributed by Cys-125. Iminosuccinate contacts are provided by residues 151–153 (YAN) and Ser-168. Residue Cys-212 participates in [4Fe-4S] cluster binding. Iminosuccinate is bound by residues 238–240 (HPE) and Thr-255. Cys-309 contacts [4Fe-4S] cluster.

Belongs to the quinolinate synthase family. Type 1 subfamily. It depends on [4Fe-4S] cluster as a cofactor.

The protein resides in the cytoplasm. The catalysed reaction is iminosuccinate + dihydroxyacetone phosphate = quinolinate + phosphate + 2 H2O + H(+). It participates in cofactor biosynthesis; NAD(+) biosynthesis; quinolinate from iminoaspartate: step 1/1. Its function is as follows. Catalyzes the condensation of iminoaspartate with dihydroxyacetone phosphate to form quinolinate. The sequence is that of Quinolinate synthase from Burkholderia lata (strain ATCC 17760 / DSM 23089 / LMG 22485 / NCIMB 9086 / R18194 / 383).